The primary structure comprises 102 residues: S-phase delaying protein 2 (102 aa).

Residues 43–62 are disordered; it reads FPSYHKDQTDRNELPQQKHD. Over residues 46 to 62 the composition is skewed to basic and acidic residues; the sequence is YHKDQTDRNELPQQKHD.

This sequence belongs to the DIF1/spd1 family.

It is found in the cytoplasm. It localises to the nucleus. Its function is as follows. Regulates the ribonucleotide reductase activity. This Schizosaccharomyces pombe (strain 972 / ATCC 24843) (Fission yeast) protein is S-phase delaying protein 2 (spd2).